A 559-amino-acid chain; its full sequence is Urocanate hydratase (559 aa).

Residues 54-55, glutamine 132, 178-180, glutamate 198, arginine 203, 244-245, 265-269, 275-276, and tyrosine 324 each bind NAD(+); these read GG, GMG, NA, QTSAH, and YL. Residue cysteine 412 is part of the active site. Glycine 494 provides a ligand contact to NAD(+).

It belongs to the urocanase family. It depends on NAD(+) as a cofactor.

The protein localises to the cytoplasm. The enzyme catalyses 4-imidazolone-5-propanoate = trans-urocanate + H2O. The protein operates within amino-acid degradation; L-histidine degradation into L-glutamate; N-formimidoyl-L-glutamate from L-histidine: step 2/3. Functionally, catalyzes the conversion of urocanate to 4-imidazolone-5-propionate. This Azotobacter vinelandii (strain DJ / ATCC BAA-1303) protein is Urocanate hydratase.